The chain runs to 421 residues: Serine--tRNA ligase (421 aa).

225–227 contributes to the L-serine binding site; sequence TAE. Residues 256–258 and Val-272 contribute to the ATP site; that span reads RSE. An L-serine-binding site is contributed by Glu-279. 345–348 serves as a coordination point for ATP; the sequence is ETHS. Residue Thr-380 coordinates L-serine.

This sequence belongs to the class-II aminoacyl-tRNA synthetase family. Type-1 seryl-tRNA synthetase subfamily. In terms of assembly, homodimer. The tRNA molecule binds across the dimer.

The protein localises to the cytoplasm. It carries out the reaction tRNA(Ser) + L-serine + ATP = L-seryl-tRNA(Ser) + AMP + diphosphate + H(+). The enzyme catalyses tRNA(Sec) + L-serine + ATP = L-seryl-tRNA(Sec) + AMP + diphosphate + H(+). It participates in aminoacyl-tRNA biosynthesis; selenocysteinyl-tRNA(Sec) biosynthesis; L-seryl-tRNA(Sec) from L-serine and tRNA(Sec): step 1/1. Its function is as follows. Catalyzes the attachment of serine to tRNA(Ser). Is also able to aminoacylate tRNA(Sec) with serine, to form the misacylated tRNA L-seryl-tRNA(Sec), which will be further converted into selenocysteinyl-tRNA(Sec). The protein is Serine--tRNA ligase of Thermus thermophilus (strain ATCC 27634 / DSM 579 / HB8).